A 151-amino-acid chain; its full sequence is Phosphopantetheine adenylyltransferase (151 aa).

Residue T9 coordinates substrate. ATP-binding positions include 9–10 (TF) and H17. 3 residues coordinate substrate: K41, T73, and R87. ATP contacts are provided by residues 88–90 (GIR), E98, and 122–128 (LTCVSST).

The protein belongs to the bacterial CoaD family. Homohexamer. It depends on Mg(2+) as a cofactor.

It is found in the cytoplasm. It catalyses the reaction (R)-4'-phosphopantetheine + ATP + H(+) = 3'-dephospho-CoA + diphosphate. It participates in cofactor biosynthesis; coenzyme A biosynthesis; CoA from (R)-pantothenate: step 4/5. In terms of biological role, reversibly transfers an adenylyl group from ATP to 4'-phosphopantetheine, yielding dephospho-CoA (dPCoA) and pyrophosphate. The sequence is that of Phosphopantetheine adenylyltransferase from Bacteroides thetaiotaomicron (strain ATCC 29148 / DSM 2079 / JCM 5827 / CCUG 10774 / NCTC 10582 / VPI-5482 / E50).